The following is a 473-amino-acid chain: Siroheme synthase (473 aa).

The precorrin-2 dehydrogenase /sirohydrochlorin ferrochelatase stretch occupies residues 1-203 (MNYLPIFIDL…GNKEQAINVL (203 aa)). NAD(+) is bound by residues 22–23 (EV) and 43–44 (KE). A Phosphoserine modification is found at Ser128. The tract at residues 215-473 (GEIILVGAGP…KNKFSTLTFI (259 aa)) is uroporphyrinogen-III C-methyltransferase. Pro224 is an S-adenosyl-L-methionine binding site. Asp247 serves as the catalytic Proton acceptor. Lys269 serves as the catalytic Proton donor. Residues 300 to 302 (GGD), Ile305, Met382, and Gly411 each bind S-adenosyl-L-methionine.

It in the N-terminal section; belongs to the precorrin-2 dehydrogenase / sirohydrochlorin ferrochelatase family. The protein in the C-terminal section; belongs to the precorrin methyltransferase family.

It carries out the reaction uroporphyrinogen III + 2 S-adenosyl-L-methionine = precorrin-2 + 2 S-adenosyl-L-homocysteine + H(+). It catalyses the reaction precorrin-2 + NAD(+) = sirohydrochlorin + NADH + 2 H(+). The catalysed reaction is siroheme + 2 H(+) = sirohydrochlorin + Fe(2+). It functions in the pathway cofactor biosynthesis; adenosylcobalamin biosynthesis; precorrin-2 from uroporphyrinogen III: step 1/1. Its pathway is cofactor biosynthesis; adenosylcobalamin biosynthesis; sirohydrochlorin from precorrin-2: step 1/1. It participates in porphyrin-containing compound metabolism; siroheme biosynthesis; precorrin-2 from uroporphyrinogen III: step 1/1. The protein operates within porphyrin-containing compound metabolism; siroheme biosynthesis; siroheme from sirohydrochlorin: step 1/1. It functions in the pathway porphyrin-containing compound metabolism; siroheme biosynthesis; sirohydrochlorin from precorrin-2: step 1/1. Multifunctional enzyme that catalyzes the SAM-dependent methylations of uroporphyrinogen III at position C-2 and C-7 to form precorrin-2 via precorrin-1. Then it catalyzes the NAD-dependent ring dehydrogenation of precorrin-2 to yield sirohydrochlorin. Finally, it catalyzes the ferrochelation of sirohydrochlorin to yield siroheme. The chain is Siroheme synthase from Buchnera aphidicola subsp. Acyrthosiphon pisum (strain APS) (Acyrthosiphon pisum symbiotic bacterium).